The sequence spans 173 residues: Cytochrome c-type biogenesis protein CcmE (173 aa).

Topologically, residues 1 to 8 are cytoplasmic; that stretch reads MNPRRKSR. Residues 9-29 traverse the membrane as a helical; Signal-anchor for type II membrane protein segment; it reads FKLVIFVVLGIAIASGLMLYA. The Periplasmic segment spans residues 30 to 173; sequence LRQNIDLFYT…RDRQEKEGAK (144 aa). The heme site is built by His131 and Tyr135. The tract at residues 152-173 is disordered; it reads GIKAADLKGESARDRQEKEGAK. Residues 156–173 are compositionally biased toward basic and acidic residues; it reads ADLKGESARDRQEKEGAK.

Belongs to the CcmE/CycJ family.

It localises to the cell inner membrane. In terms of biological role, heme chaperone required for the biogenesis of c-type cytochromes. Transiently binds heme delivered by CcmC and transfers the heme to apo-cytochromes in a process facilitated by CcmF and CcmH. The chain is Cytochrome c-type biogenesis protein CcmE from Haemophilus influenzae (strain PittEE).